We begin with the raw amino-acid sequence, 672 residues long: DNA ligase (672 aa).

Residues 34–38, 83–84, and glutamate 113 each bind NAD(+); these read DSVYD and SL. Lysine 115 functions as the N6-AMP-lysine intermediate in the catalytic mechanism. NAD(+) is bound by residues arginine 136, glutamate 170, lysine 286, and lysine 310. Cysteine 404, cysteine 407, cysteine 422, and cysteine 427 together coordinate Zn(2+). A BRCT domain is found at 592–672; sequence STDSSFNGLR…EFIQQMEEES (81 aa).

Belongs to the NAD-dependent DNA ligase family. LigA subfamily. It depends on Mg(2+) as a cofactor. The cofactor is Mn(2+).

It catalyses the reaction NAD(+) + (deoxyribonucleotide)n-3'-hydroxyl + 5'-phospho-(deoxyribonucleotide)m = (deoxyribonucleotide)n+m + AMP + beta-nicotinamide D-nucleotide.. Functionally, DNA ligase that catalyzes the formation of phosphodiester linkages between 5'-phosphoryl and 3'-hydroxyl groups in double-stranded DNA using NAD as a coenzyme and as the energy source for the reaction. It is essential for DNA replication and repair of damaged DNA. This Ligilactobacillus salivarius (strain UCC118) (Lactobacillus salivarius) protein is DNA ligase.